The primary structure comprises 1210 residues: Epidermal growth factor receptor (1210 aa).

A signal peptide spans 1–24; the sequence is MRPSGTAGAALLALLAALCPASRA. Residues 25–645 are Extracellular-facing; that stretch reads LEEKKVCQGT…CPTNGPKIPS (621 aa). Cys-31 and Cys-58 are disulfide-bonded. N-linked (GlcNAc...) (complex) asparagine; atypical; partial glycosylation occurs at Asn-56. N-linked (GlcNAc...) asparagine; atypical glycosylation is present at Asn-73. One copy of the Approximate repeat lies at 75–300; that stretch reads DLSFLKTIQE…CVKKCPRNYV (226 aa). Asn-128, Asn-175, and Asn-196 each carry an N-linked (GlcNAc...) asparagine glycan. 13 cysteine pairs are disulfide-bonded: Cys-157/Cys-187, Cys-190/Cys-199, Cys-194/Cys-207, Cys-215/Cys-223, Cys-219/Cys-231, Cys-232/Cys-240, Cys-236/Cys-248, Cys-251/Cys-260, Cys-264/Cys-291, Cys-295/Cys-307, Cys-311/Cys-326, Cys-329/Cys-333, and Cys-337/Cys-362. Ser-229 is modified (phosphoserine). Residues Asn-352, Asn-361, Asn-413, and Asn-444 are each glycosylated (N-linked (GlcNAc...) asparagine). One copy of the Approximate repeat lies at 390-600; the sequence is QELDILKTVK…CVKTCPAGVM (211 aa). 11 disulfide bridges follow: Cys-470–Cys-499, Cys-506–Cys-515, Cys-510–Cys-523, Cys-526–Cys-535, Cys-539–Cys-555, Cys-558–Cys-571, Cys-562–Cys-579, Cys-582–Cys-591, Cys-595–Cys-617, Cys-620–Cys-628, and Cys-624–Cys-636. The N-linked (GlcNAc...) asparagine glycan is linked to Asn-528. N-linked (GlcNAc...) asparagine; partial glycosylation is present at Asn-568. The N-linked (GlcNAc...) asparagine; partial glycan is linked to Asn-603. Residue Asn-623 is glycosylated (N-linked (GlcNAc...) (high mannose) asparagine). Residues 646 to 668 traverse the membrane as a helical segment; sequence IATGMVGALLLLLVVALGIGLFM. Topologically, residues 669–1210 are cytoplasmic; sequence RRRHIVRKRT…APQSSEFIGA (542 aa). Thr-678 carries the phosphothreonine; by PKC and PKD/PRKD1 modification. The segment at 688-704 is important for dimerization, phosphorylation and activation; the sequence is LVEPLTPSGEAPNQALL. A Phosphothreonine; by PKD/PRKD1 modification is found at Thr-693. Ser-695 carries the post-translational modification Phosphoserine. One can recognise a Protein kinase domain in the interval 712-979; the sequence is FKKIKVLGSG…KMARDPQRYL (268 aa). Lys-716 participates in a covalent cross-link: Glycyl lysine isopeptide (Lys-Gly) (interchain with G-Cter in ubiquitin). 718-726 contributes to the ATP binding site; sequence LGSGAFGTV. A Glycyl lysine isopeptide (Lys-Gly) (interchain with G-Cter in ubiquitin) cross-link involves residue Lys-737. Position 745 (Lys-745) interacts with ATP. Position 745 is an N6-(2-hydroxyisobutyryl)lysine (Lys-745). Residues Lys-754 and Lys-757 each participate in a glycyl lysine isopeptide (Lys-Gly) (interchain with G-Cter in ubiquitin) cross-link. 790-791 contributes to the ATP binding site; it reads TQ. Asp-837 functions as the Proton acceptor in the catalytic mechanism. Asp-855 serves as a coordination point for ATP. Residue Lys-867 forms a Glycyl lysine isopeptide (Lys-Gly) (interchain with G-Cter in ubiquitin) linkage. Tyr-869 carries the phosphotyrosine modification. Glycyl lysine isopeptide (Lys-Gly) (interchain with G-Cter in ubiquitin) cross-links involve residues Lys-929, Lys-960, and Lys-970. Ser-991 and Ser-995 each carry phosphoserine. Phosphotyrosine; by autocatalysis occurs at positions 998 and 1016. A phosphoserine mark is found at Ser-1026 and Ser-1039. Position 1041 is a phosphothreonine (Thr-1041). At Ser-1042 the chain carries Phosphoserine. Cys-1049 carries the S-palmitoyl cysteine lipid modification. Residue Ser-1064 is modified to Phosphoserine. Residue Tyr-1069 is modified to Phosphotyrosine. A phosphoserine mark is found at Ser-1070, Ser-1071, and Ser-1081. Phosphotyrosine; by autocatalysis is present on residues Tyr-1092 and Tyr-1110. Residues 1097 to 1137 form a disordered region; sequence VPKRPAGSVQNPVYHNQPLNPAPSRDPHYQDPHSTAVGNPE. Polar residues-rich tracts occupy residues 1104-1115 and 1128-1137; these read SVQNPVYHNQPL and PHSTAVGNPE. Cys-1146 is lipidated: S-palmitoyl cysteine. Ser-1166 bears the Phosphoserine mark. 2 positions are modified to phosphotyrosine; by autocatalysis: Tyr-1172 and Tyr-1197. An Omega-N-methylarginine modification is found at Arg-1199.

The protein belongs to the protein kinase superfamily. Tyr protein kinase family. EGF receptor subfamily. As to quaternary structure, binding of the ligand triggers homo- and/or heterodimerization of the receptor triggering its autophosphorylation. Heterodimer with ERBB2. Forms a complex with CCDC88A/GIV (via SH2-like regions) and GNAI3 which leads to enhanced EGFR signaling and triggering of cell migration; binding to CCDC88A requires autophosphorylation of the EGFR C-terminal region, and ligand stimulation is required for recruitment of GNAI3 to the complex. Interacts with ERRFI1; inhibits dimerization of the kinase domain and autophosphorylation. Part of a complex with ERBB2 and either PIK3C2A or PIK3C2B. Interacts with GRB2; an adapter protein coupling the receptor to downstream signaling pathways. Interacts with GAB2; involved in signaling downstream of EGFR. Interacts with STAT3; mediates EGFR downstream signaling in cell proliferation. Interacts with RIPK1; involved in NF-kappa-B activation. Interacts (autophosphorylated) with CBL, CBLB and CBLC; involved in EGFR ubiquitination and regulation; interaction with CBL is reduced in the presence of tensin TNS4. Interacts with SOCS5; regulates EGFR degradation through ELOC- and ELOB-mediated ubiquitination and proteasomal degradation. Interacts with PRMT5; methylates EGFR and enhances interaction with PTPN6. Interacts (phosphorylated) with PTPN6; inhibits EGFR-dependent activation of MAPK/ERK. Interacts with COPG1; essential for regulation of EGF-dependent nuclear transport of EGFR by retrograde trafficking from the Golgi to the ER. Interacts with TNK2; this interaction is dependent on EGF stimulation and kinase activity of EGFR. Interacts with PCNA; positively regulates PCNA. Interacts with PELP1. Interacts with MUC1. Interacts with AP2M1. Interacts with FER. May interact with EPS8; mediates EPS8 phosphorylation. Interacts (via SH2 domains) with GRB2, NCK1 and NCK2. Interacts with ATXN2. Interacts with GAREM1. Interacts (ubiquitinated) with ANKRD13A/B/D; the interaction is direct and may regulate EGFR internalization after EGF stimulation. Interacts with GPER1; the interaction occurs in an estrogen-dependent manner. Interacts (via C-terminal cytoplasmic kinase domain) with ZPR1 (via zinc fingers). Interacts with RNF115 and RNF126. Interacts with GPRC5A (via its transmembrane domain). Interacts with FAM83B; positively regulates EGFR inducing its autophosphorylation in absence of stimulation by EGF. Interacts with LAPTM4B; positively correlates with EGFR activation. Interacts with STX19. Interacts with CD44. Interacts with PGRMC1; the interaction requires PGRMC1 homodimerization. Interacts with PIKFYVE. Interacts with NEU3. Interacts with TRAF4. Interacts with the ant venom OMEGA-myrmeciitoxin(02)-Mg1a. Interacts with CD82; this interaction facilitates ligand-induced endocytosis of the receptor and its subsequent desensitization. Phosphorylated on Tyr residues in response to EGF. Phosphorylation at Ser-695 is partial and occurs only if Thr-693 is phosphorylated. Phosphorylation at Thr-678 and Thr-693 by PRKD1 inhibits EGF-induced MAPK8/JNK1 activation. Dephosphorylation by PTPRJ prevents endocytosis and stabilizes the receptor at the plasma membrane. Autophosphorylation at Tyr-1197 is stimulated by methylation at Arg-1199 and enhances interaction with PTPN6. Autophosphorylation at Tyr-1092 and/or Tyr-1110 recruits STAT3. Dephosphorylated by PTPN1 and PTPN2. In terms of processing, monoubiquitinated and polyubiquitinated upon EGF stimulation; which does not affect tyrosine kinase activity or signaling capacity but may play a role in lysosomal targeting. Polyubiquitin linkage is mainly through 'Lys-63', but linkage through 'Lys-48', 'Lys-11' and 'Lys-29' also occurs. Deubiquitination by OTUD7B prevents degradation. Ubiquitinated by RNF115 and RNF126. Ubiquitinated by ZNRF1 or CBL at different lysines in response to EGF stimulation; leading to recruitment of the ESCRT machinery and subsequent degradation in the lysosomes. Deubiquitinated by UCHL1 leading to the inhibition of its degradation. Post-translationally, palmitoylated on Cys residues by ZDHHC20. Palmitoylation inhibits internalization after ligand binding, and increases the persistence of tyrosine-phosphorylated EGFR at the cell membrane. Palmitoylation increases the amplitude and duration of EGFR signaling. Methylated. Methylation at Arg-1199 by PRMT5 stimulates phosphorylation at Tyr-1197. Ubiquitously expressed. Isoform 2 is also expressed in ovarian cancers.

Its subcellular location is the cell membrane. The protein resides in the endoplasmic reticulum membrane. It is found in the golgi apparatus membrane. The protein localises to the nucleus membrane. It localises to the endosome. Its subcellular location is the endosome membrane. The protein resides in the nucleus. It is found in the secreted. The enzyme catalyses L-tyrosyl-[protein] + ATP = O-phospho-L-tyrosyl-[protein] + ADP + H(+). Its activity is regulated as follows. Endocytosis and inhibition of the activated EGFR by phosphatases like PTPRJ and PTPRK constitute immediate regulatory mechanisms. Upon EGF-binding phosphorylates EPS15 that regulates EGFR endocytosis and activity. Moreover, inducible feedback inhibitors including LRIG1, SOCS4, SOCS5 and ERRFI1 constitute alternative regulatory mechanisms for the EGFR signaling. Up-regulated by NEU3-mediated desialylation of N-linked glycan at Asn-528. In terms of biological role, receptor tyrosine kinase binding ligands of the EGF family and activating several signaling cascades to convert extracellular cues into appropriate cellular responses. Known ligands include EGF, TGFA/TGF-alpha, AREG, epigen/EPGN, BTC/betacellulin, epiregulin/EREG and HBEGF/heparin-binding EGF. Ligand binding triggers receptor homo- and/or heterodimerization and autophosphorylation on key cytoplasmic residues. The phosphorylated receptor recruits adapter proteins like GRB2 which in turn activates complex downstream signaling cascades. Activates at least 4 major downstream signaling cascades including the RAS-RAF-MEK-ERK, PI3 kinase-AKT, PLCgamma-PKC and STATs modules. May also activate the NF-kappa-B signaling cascade. Also directly phosphorylates other proteins like RGS16, activating its GTPase activity and probably coupling the EGF receptor signaling to the G protein-coupled receptor signaling. Also phosphorylates MUC1 and increases its interaction with SRC and CTNNB1/beta-catenin. Positively regulates cell migration via interaction with CCDC88A/GIV which retains EGFR at the cell membrane following ligand stimulation, promoting EGFR signaling which triggers cell migration. Plays a role in enhancing learning and memory performance. Plays a role in mammalian pain signaling (long-lasting hypersensitivity). Isoform 2 may act as an antagonist of EGF action. Its function is as follows. (Microbial infection) Acts as a receptor for hepatitis C virus (HCV) in hepatocytes and facilitates its cell entry. Mediates HCV entry by promoting the formation of the CD81-CLDN1 receptor complexes that are essential for HCV entry and by enhancing membrane fusion of cells expressing HCV envelope glycoproteins. In Homo sapiens (Human), this protein is Epidermal growth factor receptor.